The sequence spans 517 residues: Alpha,alpha-trehalose-phosphate synthase [UDP-forming] 1 (517 aa).

Residues Y98 and D152 each contribute to the D-glucose 6-phosphate site. UDP-binding residues include R288 and K293. UDP-alpha-D-glucose contacts are provided by R288 and K293. A D-glucose 6-phosphate-binding site is contributed by R326. D387 to E395 serves as a coordination point for UDP-alpha-D-glucose. L391–E395 provides a ligand contact to UDP. A disordered region spans residues F486–Q517. Residues F493–Q517 show a composition bias toward polar residues.

This sequence belongs to the glycosyltransferase 20 family.

It carries out the reaction D-glucose 6-phosphate + UDP-alpha-D-glucose = alpha,alpha-trehalose 6-phosphate + UDP + H(+). It participates in carbohydrate biosynthesis. Functionally, synthase catalytic subunit of the trehalose synthase complex that catalyzes the production of trehalose from glucose-6-phosphate and UDP-alpha-D-glucose in a two step process. This Aspergillus niger protein is Alpha,alpha-trehalose-phosphate synthase [UDP-forming] 1.